Consider the following 643-residue polypeptide: Phosphomethylpyrimidine synthase (643 aa).

Residues asparagine 248, methionine 277, tyrosine 306, histidine 342, 362–364 (SRG), 403–406 (DGLR), and glutamate 442 each bind substrate. Histidine 446 is a binding site for Zn(2+). Residue tyrosine 469 coordinates substrate. A Zn(2+)-binding site is contributed by histidine 510. Cysteine 590, cysteine 593, and cysteine 598 together coordinate [4Fe-4S] cluster.

Belongs to the ThiC family. In terms of assembly, homodimer. The cofactor is [4Fe-4S] cluster.

It carries out the reaction 5-amino-1-(5-phospho-beta-D-ribosyl)imidazole + S-adenosyl-L-methionine = 4-amino-2-methyl-5-(phosphooxymethyl)pyrimidine + CO + 5'-deoxyadenosine + formate + L-methionine + 3 H(+). The protein operates within cofactor biosynthesis; thiamine diphosphate biosynthesis. In terms of biological role, catalyzes the synthesis of the hydroxymethylpyrimidine phosphate (HMP-P) moiety of thiamine from aminoimidazole ribotide (AIR) in a radical S-adenosyl-L-methionine (SAM)-dependent reaction. This Burkholderia pseudomallei (strain 1106a) protein is Phosphomethylpyrimidine synthase.